Here is a 1486-residue protein sequence, read N- to C-terminus: Chromosome partition protein MukB (1486 aa).

34 to 41 (GGNGAGKS) serves as a coordination point for ATP. 3 coiled-coil regions span residues 326 to 418 (LEAD…QYNQ), 444 to 480 (LETF…QAYQ), and 509 to 603 (RHLA…RAPV). Residues 666-783 (PGGSEDQRLN…EVPLFGRAAR (118 aa)) are flexible hinge. 3 coiled-coil regions span residues 835–923 (EAEI…AKLE), 977–1115 (EMLS…TAKA), and 1209–1265 (VEAI…LQSV).

It belongs to the SMC family. MukB subfamily. In terms of assembly, homodimerization via its hinge domain. Binds to DNA via its C-terminal region. Interacts, and probably forms a ternary complex, with MukE and MukF via its C-terminal region. The complex formation is stimulated by calcium or magnesium. Interacts with tubulin-related protein FtsZ.

It is found in the cytoplasm. The protein resides in the nucleoid. Functionally, plays a central role in chromosome condensation, segregation and cell cycle progression. Functions as a homodimer, which is essential for chromosome partition. Involved in negative DNA supercoiling in vivo, and by this means organize and compact chromosomes. May achieve or facilitate chromosome segregation by condensation DNA from both sides of a centrally located replisome during cell division. The sequence is that of Chromosome partition protein MukB from Escherichia coli O7:K1 (strain IAI39 / ExPEC).